The chain runs to 246 residues: 1-(5-phosphoribosyl)-5-[(5-phosphoribosylamino)methylideneamino] imidazole-4-carboxamide isomerase (246 aa).

The active-site Proton acceptor is Asp-8. Asp-131 acts as the Proton donor in catalysis.

The protein belongs to the HisA/HisF family.

It is found in the cytoplasm. The catalysed reaction is 1-(5-phospho-beta-D-ribosyl)-5-[(5-phospho-beta-D-ribosylamino)methylideneamino]imidazole-4-carboxamide = 5-[(5-phospho-1-deoxy-D-ribulos-1-ylimino)methylamino]-1-(5-phospho-beta-D-ribosyl)imidazole-4-carboxamide. It functions in the pathway amino-acid biosynthesis; L-histidine biosynthesis; L-histidine from 5-phospho-alpha-D-ribose 1-diphosphate: step 4/9. In Chromobacterium violaceum (strain ATCC 12472 / DSM 30191 / JCM 1249 / CCUG 213 / NBRC 12614 / NCIMB 9131 / NCTC 9757 / MK), this protein is 1-(5-phosphoribosyl)-5-[(5-phosphoribosylamino)methylideneamino] imidazole-4-carboxamide isomerase.